The chain runs to 167 residues: 6,7-dimethyl-8-ribityllumazine synthase (167 aa).

5-amino-6-(D-ribitylamino)uracil is bound by residues F26, 60–62 (AFE), and 89–91 (AVI). (2S)-2-hydroxy-3-oxobutyl phosphate is bound at residue 94 to 95 (ET). Catalysis depends on H97, which acts as the Proton donor. Residue F122 coordinates 5-amino-6-(D-ribitylamino)uracil. Residue R136 participates in (2S)-2-hydroxy-3-oxobutyl phosphate binding.

It belongs to the DMRL synthase family. In terms of assembly, forms an icosahedral capsid composed of 60 subunits, arranged as a dodecamer of pentamers.

It catalyses the reaction (2S)-2-hydroxy-3-oxobutyl phosphate + 5-amino-6-(D-ribitylamino)uracil = 6,7-dimethyl-8-(1-D-ribityl)lumazine + phosphate + 2 H2O + H(+). The protein operates within cofactor biosynthesis; riboflavin biosynthesis; riboflavin from 2-hydroxy-3-oxobutyl phosphate and 5-amino-6-(D-ribitylamino)uracil: step 1/2. Its function is as follows. Catalyzes the formation of 6,7-dimethyl-8-ribityllumazine by condensation of 5-amino-6-(D-ribitylamino)uracil with 3,4-dihydroxy-2-butanone 4-phosphate. This is the penultimate step in the biosynthesis of riboflavin. This chain is 6,7-dimethyl-8-ribityllumazine synthase, found in Vesicomyosocius okutanii subsp. Calyptogena okutanii (strain HA).